Here is a 92-residue protein sequence, read N- to C-terminus: MSEIQLTQVPSFRRGFRFQWEPAQNCHVLLYPEGMIKLNESAAAVLTEVDGTRTVGAIVADLQARYPEAEGIQEDIVAFLEVAVERFWIELR.

The protein belongs to the PqqD family. In terms of assembly, monomer. Interacts with PqqE.

Its pathway is cofactor biosynthesis; pyrroloquinoline quinone biosynthesis. Functionally, functions as a PqqA binding protein and presents PqqA to PqqE, in the pyrroloquinoline quinone (PQQ) biosynthetic pathway. The sequence is that of PqqA binding protein from Stutzerimonas stutzeri (strain A1501) (Pseudomonas stutzeri).